A 237-amino-acid chain; its full sequence is Uridylate kinase (237 aa).

11–14 contributes to the ATP binding site; the sequence is KLSG. Positions 18 to 23 are involved in allosteric activation by GTP; that stretch reads GGGGIG. Glycine 52 is a binding site for UMP. ATP contacts are provided by glycine 53 and arginine 57. UMP contacts are provided by residues aspartate 72 and 133–140; that span reads SGMPYFST. Positions 161, 167, and 170 each coordinate ATP.

Belongs to the UMP kinase family. As to quaternary structure, homohexamer.

The protein localises to the cytoplasm. It carries out the reaction UMP + ATP = UDP + ADP. The protein operates within pyrimidine metabolism; CTP biosynthesis via de novo pathway; UDP from UMP (UMPK route): step 1/1. Its activity is regulated as follows. Allosterically activated by GTP. Inhibited by UTP. Its function is as follows. Catalyzes the reversible phosphorylation of UMP to UDP. The chain is Uridylate kinase from Cutibacterium acnes (strain DSM 16379 / KPA171202) (Propionibacterium acnes).